Here is a 465-residue protein sequence, read N- to C-terminus: ATP synthase subunit beta (465 aa).

152-159 contacts ATP; that stretch reads GGAGVGKT.

Belongs to the ATPase alpha/beta chains family. As to quaternary structure, F-type ATPases have 2 components, CF(1) - the catalytic core - and CF(0) - the membrane proton channel. CF(1) has five subunits: alpha(3), beta(3), gamma(1), delta(1), epsilon(1). CF(0) has three main subunits: a(1), b(2) and c(9-12). The alpha and beta chains form an alternating ring which encloses part of the gamma chain. CF(1) is attached to CF(0) by a central stalk formed by the gamma and epsilon chains, while a peripheral stalk is formed by the delta and b chains.

Its subcellular location is the cell inner membrane. The catalysed reaction is ATP + H2O + 4 H(+)(in) = ADP + phosphate + 5 H(+)(out). Produces ATP from ADP in the presence of a proton gradient across the membrane. The catalytic sites are hosted primarily by the beta subunits. This is ATP synthase subunit beta from Campylobacter jejuni subsp. jejuni serotype O:6 (strain 81116 / NCTC 11828).